The primary structure comprises 155 residues: MADLRQLMDNEVLMAFTSYATIILTKMMFMSSATAFQRITNKVFANPEDCAGFGKGENAKKFVRTDEKVERVRRAHLNDLENIVPFLGIGLLYSLSGPDLSTALMHFRIFVGARIYHTIAYLTPLPQPNRGLAFFVGYGVTLSMAYRLLRSRLYL.

At 3-9 (DLRQLMD) the chain is on the lumenal side. A helical membrane pass occupies residues 10 to 33 (NEVLMAFTSYATIILTKMMFMSSA). The Cytoplasmic portion of the chain corresponds to 34–62 (TAFQRITNKVFANPEDCAGFGKGENAKKF). A glutathione-binding site is contributed by Arg-38. 3 positions are modified to N6-acetyllysine: Lys-42, Lys-55, and Lys-60. A helical transmembrane segment spans residues 63-96 (VRTDEKVERVRRAHLNDLENIVPFLGIGLLYSLS). Residues Arg-73, Arg-74, His-76, and Glu-81 each contribute to the glutathione site. Topologically, residues 97-99 (GPD) are lumenal. A helical membrane pass occupies residues 100 to 123 (LSTALMHFRIFVGARIYHTIAYLT). A glutathione-binding site is contributed by Tyr-121. Topologically, residues 124–128 (PLPQP) are cytoplasmic. Residues 129–148 (NRGLAFFVGYGVTLSMAYRL) form a helical membrane-spanning segment. Residues 149-155 (LRSRLYL) lie on the Lumenal side of the membrane.

Belongs to the MAPEG family. As to quaternary structure, homotrimer; The trimer binds only one molecule of glutathione. Acetylation of Lys-42 and Lys-55 is observed in liver mitochondria from fasted mice but not from fed mice. As to expression, expressed in the testes (at protein level).

Its subcellular location is the endoplasmic reticulum membrane. It is found in the mitochondrion outer membrane. The enzyme catalyses RX + glutathione = an S-substituted glutathione + a halide anion + H(+). Conjugation of reduced glutathione to a wide number of exogenous and endogenous hydrophobic electrophiles. The protein is Microsomal glutathione S-transferase 1 (Mgst1) of Mus musculus (Mouse).